We begin with the raw amino-acid sequence, 232 residues long: Protein FAM246A (232 aa).

Disordered stretches follow at residues 1-47, 153-178, and 191-232; these read MATP…RAPG, LPPPPPSPPARREPRAVPRATPRGPT, and AASR…GGGD. Basic and acidic residues predominate over residues 19-31; it reads EVLRRVTGRRRDP. Over residues 211-220 the composition is skewed to basic residues; it reads APVRKNHKKM.

Belongs to the FAM246 family.

The protein is Protein FAM246A of Homo sapiens (Human).